Consider the following 151-residue polypeptide: Putative pre-16S rRNA nuclease (151 aa).

The protein belongs to the YqgF nuclease family.

The protein localises to the cytoplasm. Could be a nuclease involved in processing of the 5'-end of pre-16S rRNA. The polypeptide is Putative pre-16S rRNA nuclease (Pelagibacter ubique (strain HTCC1062)).